The chain runs to 119 residues: Ribosome-binding factor A (119 aa).

The protein belongs to the RbfA family. Monomer. Binds 30S ribosomal subunits, but not 50S ribosomal subunits or 70S ribosomes.

It is found in the cytoplasm. One of several proteins that assist in the late maturation steps of the functional core of the 30S ribosomal subunit. Associates with free 30S ribosomal subunits (but not with 30S subunits that are part of 70S ribosomes or polysomes). Required for efficient processing of 16S rRNA. May interact with the 5'-terminal helix region of 16S rRNA. The polypeptide is Ribosome-binding factor A (Chlorobium luteolum (strain DSM 273 / BCRC 81028 / 2530) (Pelodictyon luteolum)).